A 113-amino-acid polypeptide reads, in one-letter code: Large ribosomal subunit protein uL22 (113 aa).

Belongs to the universal ribosomal protein uL22 family. Part of the 50S ribosomal subunit.

Functionally, this protein binds specifically to 23S rRNA; its binding is stimulated by other ribosomal proteins, e.g. L4, L17, and L20. It is important during the early stages of 50S assembly. It makes multiple contacts with different domains of the 23S rRNA in the assembled 50S subunit and ribosome. In terms of biological role, the globular domain of the protein is located near the polypeptide exit tunnel on the outside of the subunit, while an extended beta-hairpin is found that lines the wall of the exit tunnel in the center of the 70S ribosome. This chain is Large ribosomal subunit protein uL22, found in Anoxybacillus flavithermus (strain DSM 21510 / WK1).